A 720-amino-acid chain; its full sequence is Glycine--tRNA ligase beta subunit (720 aa).

This sequence belongs to the class-II aminoacyl-tRNA synthetase family. As to quaternary structure, tetramer of two alpha and two beta subunits.

It is found in the cytoplasm. The catalysed reaction is tRNA(Gly) + glycine + ATP = glycyl-tRNA(Gly) + AMP + diphosphate. The protein is Glycine--tRNA ligase beta subunit of Acidovorax ebreus (strain TPSY) (Diaphorobacter sp. (strain TPSY)).